Here is a 448-residue protein sequence, read N- to C-terminus: Signal recognition particle 54 kDa protein (448 aa).

Residues 107–114, 189–193, and 247–250 contribute to the GTP site; these read GIQGSGKT, DTAGR, and TKLD.

The protein belongs to the GTP-binding SRP family. SRP54 subfamily. As to quaternary structure, part of the signal recognition particle protein translocation system, which is composed of SRP and FtsY. Archaeal SRP consists of a 7S RNA molecule of 300 nucleotides and two protein subunits: SRP54 and SRP19.

The protein resides in the cytoplasm. The enzyme catalyses GTP + H2O = GDP + phosphate + H(+). Involved in targeting and insertion of nascent membrane proteins into the cytoplasmic membrane. Binds to the hydrophobic signal sequence of the ribosome-nascent chain (RNC) as it emerges from the ribosomes. The SRP-RNC complex is then targeted to the cytoplasmic membrane where it interacts with the SRP receptor FtsY. This is Signal recognition particle 54 kDa protein from Thermococcus gammatolerans (strain DSM 15229 / JCM 11827 / EJ3).